The sequence spans 207 residues: UPF0319 protein VV2327 (207 aa).

The signal sequence occupies residues 1–18; the sequence is MLRVLGLAGMLMSFNIHA.

It belongs to the UPF0319 family.

This is UPF0319 protein VV2327 from Vibrio vulnificus (strain YJ016).